The sequence spans 256 residues: Thiazole synthase (256 aa).

Lys98 acts as the Schiff-base intermediate with DXP in catalysis. Residues Gly159, Ala185 to Gly186, and Asn207 to Thr208 each bind 1-deoxy-D-xylulose 5-phosphate.

The protein belongs to the ThiG family. In terms of assembly, homotetramer. Forms heterodimers with either ThiH or ThiS.

It localises to the cytoplasm. The enzyme catalyses [ThiS sulfur-carrier protein]-C-terminal-Gly-aminoethanethioate + 2-iminoacetate + 1-deoxy-D-xylulose 5-phosphate = [ThiS sulfur-carrier protein]-C-terminal Gly-Gly + 2-[(2R,5Z)-2-carboxy-4-methylthiazol-5(2H)-ylidene]ethyl phosphate + 2 H2O + H(+). It functions in the pathway cofactor biosynthesis; thiamine diphosphate biosynthesis. In terms of biological role, catalyzes the rearrangement of 1-deoxy-D-xylulose 5-phosphate (DXP) to produce the thiazole phosphate moiety of thiamine. Sulfur is provided by the thiocarboxylate moiety of the carrier protein ThiS. In vitro, sulfur can be provided by H(2)S. This chain is Thiazole synthase, found in Aliivibrio fischeri (strain ATCC 700601 / ES114) (Vibrio fischeri).